We begin with the raw amino-acid sequence, 398 residues long: Phosphoglycerate kinase (398 aa).

Residues 23-25 (DFN), Arg38, 61-64 (HMGK), Arg122, and Arg155 each bind substrate. ATP is bound by residues Lys206, Gly297, Glu328, and 354 to 357 (GGDS).

It belongs to the phosphoglycerate kinase family. In terms of assembly, monomer.

It is found in the cytoplasm. The enzyme catalyses (2R)-3-phosphoglycerate + ATP = (2R)-3-phospho-glyceroyl phosphate + ADP. Its pathway is carbohydrate degradation; glycolysis; pyruvate from D-glyceraldehyde 3-phosphate: step 2/5. The chain is Phosphoglycerate kinase from Clostridium botulinum (strain Loch Maree / Type A3).